The following is a 690-amino-acid chain: Elongation factor G (690 aa).

In terms of domain architecture, tr-type G spans 8–283; that stretch reads EDYRNFGIMA…AVVDYLPSPV (276 aa). GTP contacts are provided by residues 17 to 24, 81 to 85, and 135 to 138; these read AHIDAGKT, DTPGH, and NKMD.

This sequence belongs to the TRAFAC class translation factor GTPase superfamily. Classic translation factor GTPase family. EF-G/EF-2 subfamily.

The protein resides in the cytoplasm. Functionally, catalyzes the GTP-dependent ribosomal translocation step during translation elongation. During this step, the ribosome changes from the pre-translocational (PRE) to the post-translocational (POST) state as the newly formed A-site-bound peptidyl-tRNA and P-site-bound deacylated tRNA move to the P and E sites, respectively. Catalyzes the coordinated movement of the two tRNA molecules, the mRNA and conformational changes in the ribosome. This is Elongation factor G from Rhodopseudomonas palustris (strain BisA53).